Reading from the N-terminus, the 131-residue chain is ATP synthase epsilon chain, chloroplastic (131 aa).

It belongs to the ATPase epsilon chain family. As to quaternary structure, F-type ATPases have 2 components, CF(1) - the catalytic core - and CF(0) - the membrane proton channel. CF(1) has five subunits: alpha(3), beta(3), gamma(1), delta(1), epsilon(1). CF(0) has three main subunits: a, b and c.

Its subcellular location is the plastid. It localises to the chloroplast thylakoid membrane. Functionally, produces ATP from ADP in the presence of a proton gradient across the membrane. The chain is ATP synthase epsilon chain, chloroplastic from Oltmannsiellopsis viridis (Marine flagellate).